Reading from the N-terminus, the 230-residue chain is MREERPIIALDFPSFEEVKSFLSLFPADERLYVKIGMELYYAEGPDIVRYVKSLGHSVFLDLKLHDIPNTVKSTMAVLSRLGIDMTTVQAAGGVEMLRAAREGLGQGPILIAVTQLTSTSEEQMREDQNIQSTLLASVLHYAKRTAQAKLDGVVCSAHEVKAIKSEVPAGFVCLTPGIRPTGADIGDQKRVMTPHQARAIGSDYIVLGRPITQATDPVKAYHQIKAEWNR.

Substrate contacts are provided by residues Asp-11, Lys-34, 61-70 (DLKLHDIPNT), Thr-117, Arg-179, Gln-188, Gly-208, and Arg-209. Lys-63 acts as the Proton donor in catalysis.

Belongs to the OMP decarboxylase family. Type 1 subfamily. As to quaternary structure, homodimer.

The catalysed reaction is orotidine 5'-phosphate + H(+) = UMP + CO2. It participates in pyrimidine metabolism; UMP biosynthesis via de novo pathway; UMP from orotate: step 2/2. Functionally, catalyzes the decarboxylation of orotidine 5'-monophosphate (OMP) to uridine 5'-monophosphate (UMP). The polypeptide is Orotidine 5'-phosphate decarboxylase (Streptococcus equi subsp. zooepidemicus (strain MGCS10565)).